The primary structure comprises 301 residues: Runt-related transcription factor rnt-1 (301 aa).

Residues 10 to 138 form the Runt domain; it reads NFIEQQPAPA…TVDGPRDARI (129 aa). 3 interaction with DNA regions span residues 40 to 44, 95 to 103, and 128 to 137; these read RSNKS, RFVGRSGRG, and VTVDGPRDAR. The chloride site is built by arginine 99 and valine 130. The tract at residues 237-301 is disordered; it reads PSIFITPTSD…SSSPTIWRPF (65 aa). Serine 255 is subject to Phosphoserine. Residues 255–276 are compositionally biased toward polar residues; the sequence is SPRSITKSSETSINLIQETPES. Residues 285-301 are compositionally biased toward low complexity; it reads VSITSSNSSSPTIWRPF.

As to quaternary structure, interacts with CBFbeta homolog bro-1; acts to increase the affinity and specificity of interaction of rnt-1 with DNA. Interacts with TGF-beta pathway protein sma-4. May be ubiquitinated in order to be targeted for proteasome-mediated degradation in intestinal cells. Post-translationally, may be phosphorylated by members of the p38 MAP kinase pathway. In terms of tissue distribution, expressed in the intestine.

The protein localises to the nucleus. In terms of biological role, transcription factor. Binds to regulatory DNA sequences in order to modulate transcription; negatively autoregulates its own expression, perhaps dependent upon CBF beta homolog bro-1. Promotes proliferation, and prevents differentiation, of seam cells, a stem cell-like lineage, acting in concert with bro-1. Required for controlling cell proliferation in the seam cells, perhaps by repressing expression of cyclin-dependent kinase inhibitor cki-1. Inhibition of seam cell differentiation is regulated by rnt-1 and bro-1, perhaps acting upstream of pop-1, by antagonizing pop-1 repressor function. Required for asymmetrical cell divisions in the lineage derived from a posterior embryonic seam cell, the T blast cell, and for asymmetric expression of zinc finger protein tlp-1. Regulates growth and male tail development. Involved in the oxidative stress response, perhaps downstream of the p38 MAP kinase pathway, and acting as part of a negative feedback loop via a transcriptional target gene, tyrosine-protein phosphatase vhp-1. Positively modulates dopaminergic signaling in a non-cell autonomous manner. May be involved in TGF-beta signaling. The sequence is that of Runt-related transcription factor rnt-1 from Caenorhabditis elegans.